The chain runs to 199 residues: uncharacterized protein (199 aa).

Residues 1 to 30 (MEDAAAPGRTEGVLERQGAPPAAGQGGALV) form a disordered region. The stretch at 71–101 (RANATNKLTVIAEQIQHLQEQARKVLEDAHR) forms a coiled coil.

This is an uncharacterized protein from Homo sapiens (Human).